Consider the following 98-residue polypeptide: NADH-ubiquinone oxidoreductase chain 4L (98 aa).

A run of 3 helical transmembrane segments spans residues 1-21 (MSLV…GLLM), 29-49 (SLLC…LMIL), and 61-81 (IILL…LVMV).

This sequence belongs to the complex I subunit 4L family. As to quaternary structure, core subunit of respiratory chain NADH dehydrogenase (Complex I) which is composed of 45 different subunits.

The protein localises to the mitochondrion inner membrane. It carries out the reaction a ubiquinone + NADH + 5 H(+)(in) = a ubiquinol + NAD(+) + 4 H(+)(out). Its function is as follows. Core subunit of the mitochondrial membrane respiratory chain NADH dehydrogenase (Complex I) which catalyzes electron transfer from NADH through the respiratory chain, using ubiquinone as an electron acceptor. Part of the enzyme membrane arm which is embedded in the lipid bilayer and involved in proton translocation. In Capra hircus (Goat), this protein is NADH-ubiquinone oxidoreductase chain 4L (MT-ND4L).